Reading from the N-terminus, the 217-residue chain is Probable transaldolase (217 aa).

K83 serves as the catalytic Schiff-base intermediate with substrate.

This sequence belongs to the transaldolase family. Type 3B subfamily.

The protein resides in the cytoplasm. It carries out the reaction D-sedoheptulose 7-phosphate + D-glyceraldehyde 3-phosphate = D-erythrose 4-phosphate + beta-D-fructose 6-phosphate. The protein operates within carbohydrate degradation; pentose phosphate pathway; D-glyceraldehyde 3-phosphate and beta-D-fructose 6-phosphate from D-ribose 5-phosphate and D-xylulose 5-phosphate (non-oxidative stage): step 2/3. Transaldolase is important for the balance of metabolites in the pentose-phosphate pathway. The polypeptide is Probable transaldolase (Hydrogenobaculum sp. (strain Y04AAS1)).